The sequence spans 141 residues: ATP synthase epsilon chain (141 aa).

It belongs to the ATPase epsilon chain family. In terms of assembly, F-type ATPases have 2 components, CF(1) - the catalytic core - and CF(0) - the membrane proton channel. CF(1) has five subunits: alpha(3), beta(3), gamma(1), delta(1), epsilon(1). CF(0) has three main subunits: a, b and c.

It localises to the cell inner membrane. In terms of biological role, produces ATP from ADP in the presence of a proton gradient across the membrane. The chain is ATP synthase epsilon chain from Paraburkholderia phytofirmans (strain DSM 17436 / LMG 22146 / PsJN) (Burkholderia phytofirmans).